The following is a 332-amino-acid chain: Probable allantoicase (332 aa).

This sequence belongs to the allantoicase family.

It carries out the reaction allantoate + H2O = (S)-ureidoglycolate + urea. The protein operates within nitrogen metabolism; (S)-allantoin degradation; (S)-ureidoglycolate from allantoate (aminidohydrolase route): step 1/1. In Pseudomonas aeruginosa (strain UCBPP-PA14), this protein is Probable allantoicase.